Here is a 339-residue protein sequence, read N- to C-terminus: UDP-N-acetylglucosamine--N-acetylmuramyl-(pentapeptide) pyrophosphoryl-undecaprenol N-acetylglucosamine transferase (339 aa).

Residues 11–13 (TGG), N127, R170, S188, I235, and Q280 each bind UDP-N-acetyl-alpha-D-glucosamine.

The protein belongs to the glycosyltransferase 28 family. MurG subfamily.

The protein localises to the cell inner membrane. It catalyses the reaction di-trans,octa-cis-undecaprenyl diphospho-N-acetyl-alpha-D-muramoyl-L-alanyl-D-glutamyl-meso-2,6-diaminopimeloyl-D-alanyl-D-alanine + UDP-N-acetyl-alpha-D-glucosamine = di-trans,octa-cis-undecaprenyl diphospho-[N-acetyl-alpha-D-glucosaminyl-(1-&gt;4)]-N-acetyl-alpha-D-muramoyl-L-alanyl-D-glutamyl-meso-2,6-diaminopimeloyl-D-alanyl-D-alanine + UDP + H(+). It participates in cell wall biogenesis; peptidoglycan biosynthesis. Functionally, cell wall formation. Catalyzes the transfer of a GlcNAc subunit on undecaprenyl-pyrophosphoryl-MurNAc-pentapeptide (lipid intermediate I) to form undecaprenyl-pyrophosphoryl-MurNAc-(pentapeptide)GlcNAc (lipid intermediate II). The sequence is that of UDP-N-acetylglucosamine--N-acetylmuramyl-(pentapeptide) pyrophosphoryl-undecaprenol N-acetylglucosamine transferase from Thermotoga petrophila (strain ATCC BAA-488 / DSM 13995 / JCM 10881 / RKU-1).